Consider the following 165-residue polypeptide: Natriuretic peptide Na-NP (165 aa).

Residues Met1–Gly25 form the signal peptide. A propeptide spanning residues Lys26–Gln83 is cleaved from the precursor. Positions Ser56–His68 are enriched in basic and acidic residues. 2 disordered regions span residues Ser56–Asp100 and Pro135–Ile165. A disulfide bridge links Cys94 with Cys110. Positions Ile129–Ile165 are excised as a propeptide. Positions Pro135–His149 are enriched in basic and acidic residues. Positions Val154 to Ile165 are enriched in gly residues.

Belongs to the natriuretic peptide family. Expressed by the venom gland.

Its subcellular location is the secreted. Functionally, natriuretic peptide that dose-dependently induces the rapid relaxation of rat aortic strips phenylephrine-precontracted. Acts by stimulating cGMP production in a dose-dependent manner (by probably activating NPR1 and/or NPR2). May also show potent hypotensive effects. The protein is Natriuretic peptide Na-NP of Naja atra (Chinese cobra).